Consider the following 439-residue polypeptide: Xylose isomerase (439 aa).

Residues His101 and Asp104 contribute to the active site. Mg(2+) contacts are provided by Glu232, Glu268, His271, Asp296, Asp307, Asp309, and Asp339.

Belongs to the xylose isomerase family. As to quaternary structure, homotetramer. Mg(2+) serves as cofactor.

It is found in the cytoplasm. The enzyme catalyses alpha-D-xylose = alpha-D-xylulofuranose. In Photorhabdus laumondii subsp. laumondii (strain DSM 15139 / CIP 105565 / TT01) (Photorhabdus luminescens subsp. laumondii), this protein is Xylose isomerase.